The chain runs to 224 residues: Small ribosomal subunit protein uS7 (224 aa).

It belongs to the universal ribosomal protein uS7 family. As to quaternary structure, part of the 30S ribosomal subunit.

Functionally, one of the primary rRNA binding proteins, it binds directly to 16S rRNA where it nucleates assembly of the head domain of the 30S subunit. Is located at the subunit interface close to the decoding center. In Caldivirga maquilingensis (strain ATCC 700844 / DSM 13496 / JCM 10307 / IC-167), this protein is Small ribosomal subunit protein uS7.